A 488-amino-acid chain; its full sequence is Malonate-semialdehyde dehydrogenase (488 aa).

Residues Ala150, Phe152, Lys176, Glu179, Arg180, Ser229, and Thr251 each contribute to the NAD(+) site. Cys284 functions as the Nucleophile in the catalytic mechanism. Glu382 is a binding site for NAD(+).

The protein belongs to the aldehyde dehydrogenase family. IolA subfamily. As to quaternary structure, homotetramer.

It catalyses the reaction 3-oxopropanoate + NAD(+) + CoA + H2O = hydrogencarbonate + acetyl-CoA + NADH + H(+). It carries out the reaction 2-methyl-3-oxopropanoate + NAD(+) + CoA + H2O = propanoyl-CoA + hydrogencarbonate + NADH + H(+). Its pathway is polyol metabolism; myo-inositol degradation into acetyl-CoA; acetyl-CoA from myo-inositol: step 7/7. Functionally, catalyzes the oxidation of malonate semialdehyde (MSA) and methylmalonate semialdehyde (MMSA) into acetyl-CoA and propanoyl-CoA, respectively. Is involved in a myo-inositol catabolic pathway. Bicarbonate, and not CO2, is the end-product of the enzymatic reaction. This is Malonate-semialdehyde dehydrogenase from Listeria monocytogenes serotype 4b (strain CLIP80459).